The sequence spans 706 residues: Kinesin-like protein KIF2A (706 aa).

The segment at 1 to 217 is globular; that stretch reads MATANFGKIQ…LDYRPLTTAD (217 aa). Residues 66–139 form a disordered region; it reads LVPDEEIEPS…AQQNGSVSDI (74 aa). Position 75 is a phosphoserine (Ser-75). 2 positions are modified to phosphothreonine: Thr-78 and Thr-97. Phosphoserine is present on Ser-100. Lys-102 carries the N6-acetyllysine modification. Polar residues predominate over residues 123 to 139; the sequence is FPEQSSSAQQNGSVSDI. Phosphoserine is present on residues Ser-135 and Ser-140. Residues 165–186 form a disordered region; sequence KLQEKREKRRLQQQELREKRAQ. In terms of domain architecture, Kinesin motor spans 223-553; sequence RICVCVRKRP…LRYANRVKEL (331 aa). 313–320 provides a ligand contact to ATP; that stretch reads GQTGSGKT. 2 positions are modified to phosphoserine: Asp-556 and Gln-573. The stretch at 660 to 699 forms a coiled coil; it reads ATQLEAILEQKIDILTELRDKVKSFRAALQEEEQASKQIN.

The protein belongs to the TRAFAC class myosin-kinesin ATPase superfamily. Kinesin family. MCAK/KIF2 subfamily. In terms of assembly, interacts with AURKA and PLK1. Interacts with PSRC1. Interacts with MCRS1; the interaction enhances recruitment of KIF2A to the minus ends of spindle microtubules which promotes chromosome alignment.

It is found in the cytoplasm. The protein localises to the cytoskeleton. It localises to the microtubule organizing center. The protein resides in the centrosome. Its subcellular location is the spindle pole. It is found in the spindle. Its function is as follows. Plus end-directed microtubule-dependent motor required for normal brain development. May regulate microtubule dynamics during axonal growth. Required for normal progression through mitosis. Required for normal congress of chromosomes at the metaphase plate. Required for normal spindle dynamics during mitosis. Promotes spindle turnover. Implicated in formation of bipolar mitotic spindles. Has microtubule depolymerization activity. The protein is Kinesin-like protein KIF2A (KIF2A) of Homo sapiens (Human).